We begin with the raw amino-acid sequence, 251 residues long: B3 domain-containing protein At2g24670 (251 aa).

Residues 48 to 111 form a disordered region; the sequence is TTPSTVMESK…SSKTREPTPG (64 aa). The segment covering 56–70 has biased composition (basic and acidic residues); it reads SKSHIHDHSLRESPT. Residues 153–249 constitute a DNA-binding region (TF-B3); sequence VSQIVELEFL…TLYFALVPLY (97 aa).

The protein localises to the nucleus. The chain is B3 domain-containing protein At2g24670 from Arabidopsis thaliana (Mouse-ear cress).